We begin with the raw amino-acid sequence, 317 residues long: NADH-quinone oxidoreductase subunit H 1 (317 aa).

8 consecutive transmembrane segments (helical) span residues 7–27, 74–94, 107–127, 147–167, 179–199, 230–250, 257–277, and 297–317; these read IWVN…MLSW, AVFV…FAVV, IGVL…VLGG, LSYE…AGSF, LWFC…GIAE, FFIG…TLFF, VLPP…CFVL, and VMLP…LSVA.

The protein belongs to the complex I subunit 1 family. As to quaternary structure, NDH-1 is composed of 14 different subunits. Subunits NuoA, H, J, K, L, M, N constitute the membrane sector of the complex.

The protein localises to the cell inner membrane. The catalysed reaction is a quinone + NADH + 5 H(+)(in) = a quinol + NAD(+) + 4 H(+)(out). Its function is as follows. NDH-1 shuttles electrons from NADH, via FMN and iron-sulfur (Fe-S) centers, to quinones in the respiratory chain. The immediate electron acceptor for the enzyme in this species is believed to be ubiquinone. Couples the redox reaction to proton translocation (for every two electrons transferred, four hydrogen ions are translocated across the cytoplasmic membrane), and thus conserves the redox energy in a proton gradient. This subunit may bind ubiquinone. The protein is NADH-quinone oxidoreductase subunit H 1 of Nitrosospira multiformis (strain ATCC 25196 / NCIMB 11849 / C 71).